The following is a 184-amino-acid chain: Gremlin-1 (184 aa).

Positions 1–24 (MNRTAYTVGALLLLLGTLLPAAEG) are cleaved as a signal peptide. N2 and N42 each carry an N-linked (GlcNAc...) asparagine glycan. The segment at 24–78 (GKKKGSQGAIPPPDKAQHNDSEQTQSPPQPGSRTRGRGQGRGTAMPGEEVLESSQ) is disordered. 4 cysteine pairs are disulfide-bonded: C94/C144, C108/C158, C118/C176, and C122/C178. The 91-residue stretch at 94–184 (CKTQPLKQTI…QCRCISIDLD (91 aa)) folds into the CTCK domain.

It belongs to the DAN family. In terms of assembly, homodimer; can also form homooligomers. Interacts with BMP2; can form higher oligomers with BMP2. Interacts with SLIT1 and SLIT2 in a glycosylation-dependent manner. As to expression, highly expressed in the brain, kidney, spleen, and testis and weakly expressed in the lung and liver. Predominantly expressed in differentiated cells as neurons in brain, type I cells in lung and globlet cells in intestine.

Its subcellular location is the secreted. In terms of biological role, cytokine that may play an important role during carcinogenesis and metanephric kidney organogenesis, as a BMP antagonist required for early limb outgrowth and patterning in maintaining the FGF4-SHH feedback loop. Down-regulates the BMP4 signaling in a dose-dependent manner. Antagonist of BMP2; inhibits BMP2-mediated differentiation of osteoblasts (in vitro). Acts as inhibitor of monocyte chemotaxis. Can inhibit the growth or viability of normal cells but not transformed cells when is overexpressed. The protein is Gremlin-1 (Grem1) of Rattus norvegicus (Rat).